The chain runs to 315 residues: MAVMNELKIVFMGSPEFALTPLKMLLAEGYDICGVYTQPDRPAGRGRELCPPPVKTLALEHGLAVYQPQSLKKPEEQAFLKELKPDVIVVAAYGLILPQAVLDIPVYGVLNIHPSLLPRYRGATPVAATLLGGDEWAGVSLMKLEAGLDTGPVYSRSMVAIRPEDTTPILADKLAFIGGCMLLELLSQIPSLPEPQVQDNTQASYFGMVTKEMGLINWQTSAVEIERRVRAFFPWPGVFTTFNQKTLKILEAKPRNLGLGLKPSEVRVYEQSRVMVGSASGELEIIRLQLEGKAGCSAADFVRGQRNFDGVNLGV.

Residue 115 to 118 (SLLP) coordinates (6S)-5,6,7,8-tetrahydrofolate.

Belongs to the Fmt family.

The catalysed reaction is L-methionyl-tRNA(fMet) + (6R)-10-formyltetrahydrofolate = N-formyl-L-methionyl-tRNA(fMet) + (6S)-5,6,7,8-tetrahydrofolate + H(+). Functionally, attaches a formyl group to the free amino group of methionyl-tRNA(fMet). The formyl group appears to play a dual role in the initiator identity of N-formylmethionyl-tRNA by promoting its recognition by IF2 and preventing the misappropriation of this tRNA by the elongation apparatus. In Dehalococcoides mccartyi (strain ATCC BAA-2100 / JCM 16839 / KCTC 5957 / BAV1), this protein is Methionyl-tRNA formyltransferase.